A 703-amino-acid chain; its full sequence is FERM domain-containing protein 7 (703 aa).

The region spanning 2 to 282 (LHLKVQFLDD…EYHAFFRLSE (281 aa)) is the FERM domain. Residues 525–552 (RNMRIKSLQQDLQELQEAMARTSGRSNI) adopt a coiled-coil conformation.

As to expression, in the developing cerebral cortex, strong expression is observed in the ventricular and intermediate zones at 13 and 17 dpc. At 17 dpc and P0, expression appears to be restricted to the cortical plate. In neonates, highly expressed in cortex, hippocampus, cerebellum, olfactory bulb and eye with little or no expression in liver, kidney, skeletal muscle or heart muscle (at protein level).

Its subcellular location is the cell projection. The protein resides in the neuron projection. It localises to the growth cone. Its function is as follows. Plays a role in neurite development, may be through the activation of the GTPase RAC1. Plays a role in the control of eye movement and gaze stability. The chain is FERM domain-containing protein 7 from Mus musculus (Mouse).